A 464-amino-acid chain; its full sequence is Dolichyl-diphosphooligosaccharide--protein glycosyltransferase subunit 1B (464 aa).

The N-terminal stretch at Met1 to Ala24 is a signal peptide. Residues Gln25–Glu436 are Lumenal-facing. Residues Asn106 and Asn298 are each glycosylated (N-linked (GlcNAc...) asparagine). Lys310 is covalently cross-linked (Glycyl lysine isopeptide (Lys-Gly) (interchain with G-Cter in ubiquitin)). A glycan (N-linked (GlcNAc...) asparagine) is linked at Asn352. The helical transmembrane segment at Pro437–Ile457 threads the bilayer. The Cytoplasmic segment spans residues Asp458 to Lys464.

This sequence belongs to the OST1 family. As to quaternary structure, component of the oligosaccharyltransferase (OST) complex.

Its subcellular location is the endoplasmic reticulum membrane. The protein operates within protein modification; protein glycosylation. Subunit of the oligosaccharyl transferase (OST) complex that catalyzes the initial transfer of a defined glycan (Glc(3)Man(9)GlcNAc(2) in eukaryotes) from the lipid carrier dolichol-pyrophosphate to an asparagine residue within an Asn-X-Ser/Thr consensus motif in nascent polypeptide chains, the first step in protein N-glycosylation. N-glycosylation occurs cotranslationally and the complex associates with the Sec61 complex at the channel-forming translocon complex that mediates protein translocation across the endoplasmic reticulum (ER). All subunits are required for a maximal enzyme activity. In Arabidopsis thaliana (Mouse-ear cress), this protein is Dolichyl-diphosphooligosaccharide--protein glycosyltransferase subunit 1B (OST1B).